Reading from the N-terminus, the 253-residue chain is 2-succinyl-6-hydroxy-2,4-cyclohexadiene-1-carboxylate synthase (253 aa).

One can recognise an AB hydrolase-1 domain in the interval 11 to 147 (PWLVCLHGLF…PEALQDWYQQ (137 aa)).

Belongs to the AB hydrolase superfamily. MenH family. As to quaternary structure, monomer.

The enzyme catalyses 5-enolpyruvoyl-6-hydroxy-2-succinyl-cyclohex-3-ene-1-carboxylate = (1R,6R)-6-hydroxy-2-succinyl-cyclohexa-2,4-diene-1-carboxylate + pyruvate. The protein operates within quinol/quinone metabolism; 1,4-dihydroxy-2-naphthoate biosynthesis; 1,4-dihydroxy-2-naphthoate from chorismate: step 3/7. It functions in the pathway quinol/quinone metabolism; menaquinone biosynthesis. Its function is as follows. Catalyzes a proton abstraction reaction that results in 2,5-elimination of pyruvate from 2-succinyl-5-enolpyruvyl-6-hydroxy-3-cyclohexene-1-carboxylate (SEPHCHC) and the formation of 2-succinyl-6-hydroxy-2,4-cyclohexadiene-1-carboxylate (SHCHC). The chain is 2-succinyl-6-hydroxy-2,4-cyclohexadiene-1-carboxylate synthase from Pectobacterium atrosepticum (strain SCRI 1043 / ATCC BAA-672) (Erwinia carotovora subsp. atroseptica).